The following is a 338-amino-acid chain: DNA-directed RNA polymerase subunit alpha (338 aa).

Positions 1–234 (MIHKNWAELI…DQLSIFVNFD (234 aa)) are alpha N-terminal domain (alpha-NTD). Residues 250-338 (FNPLLLKKVD…DLAKKFEDAF (89 aa)) are alpha C-terminal domain (alpha-CTD).

This sequence belongs to the RNA polymerase alpha chain family. In terms of assembly, homodimer. The RNAP catalytic core consists of 2 alpha, 1 beta, 1 beta' and 1 omega subunit. When a sigma factor is associated with the core the holoenzyme is formed, which can initiate transcription.

It carries out the reaction RNA(n) + a ribonucleoside 5'-triphosphate = RNA(n+1) + diphosphate. Its function is as follows. DNA-dependent RNA polymerase catalyzes the transcription of DNA into RNA using the four ribonucleoside triphosphates as substrates. The polypeptide is DNA-directed RNA polymerase subunit alpha (Ruegeria pomeroyi (strain ATCC 700808 / DSM 15171 / DSS-3) (Silicibacter pomeroyi)).